The chain runs to 109 residues: Nucleoid-associated protein Plut_1285 (109 aa).

Belongs to the YbaB/EbfC family. In terms of assembly, homodimer.

The protein localises to the cytoplasm. It is found in the nucleoid. Functionally, binds to DNA and alters its conformation. May be involved in regulation of gene expression, nucleoid organization and DNA protection. The chain is Nucleoid-associated protein Plut_1285 from Chlorobium luteolum (strain DSM 273 / BCRC 81028 / 2530) (Pelodictyon luteolum).